We begin with the raw amino-acid sequence, 400 residues long: uncharacterized protein (400 aa).

The protein to M.jannaschii MJ1544 and MJ1637.

This is an uncharacterized protein from Haemophilus influenzae (strain ATCC 51907 / DSM 11121 / KW20 / Rd).